A 141-amino-acid chain; its full sequence is HTH-type transcriptional repressor NsrR (141 aa).

Positions 2–129 (QLTSFTDYGL…DNYTLADLVE (128 aa)) constitute an HTH rrf2-type domain. Residues 28 to 51 (ISEVTEVYGVSRNHMVKIINQLSR) constitute a DNA-binding region (H-T-H motif). C91, C96, and C102 together coordinate [2Fe-2S] cluster.

[2Fe-2S] cluster serves as cofactor.

Nitric oxide-sensitive repressor of genes involved in protecting the cell against nitrosative stress. May require iron for activity. The chain is HTH-type transcriptional repressor NsrR from Klebsiella pneumoniae subsp. pneumoniae (strain ATCC 700721 / MGH 78578).